The sequence spans 118 residues: MGKLSTHVLDTAHGTPAAAMRVELYRIAASGTPELLKRVVTNLDGRTDAPLLSGDEMRTGIYELQFHVAEYFEGRGAELAHEPFLDLIPIRFGIADEDGNYHVPLLVSPWSYSTYRGS.

The substrate site is built by His-7, Arg-46, and Tyr-115.

It belongs to the transthyretin family. 5-hydroxyisourate hydrolase subfamily. As to quaternary structure, homotetramer.

The catalysed reaction is 5-hydroxyisourate + H2O = 5-hydroxy-2-oxo-4-ureido-2,5-dihydro-1H-imidazole-5-carboxylate + H(+). Catalyzes the hydrolysis of 5-hydroxyisourate (HIU) to 2-oxo-4-hydroxy-4-carboxy-5-ureidoimidazoline (OHCU). The chain is 5-hydroxyisourate hydrolase from Brucella melitensis biotype 1 (strain ATCC 23456 / CCUG 17765 / NCTC 10094 / 16M).